The sequence spans 165 residues: Large ribosomal subunit protein uL11 (165 aa).

Ser38 is subject to Phosphoserine. A Glycyl lysine isopeptide (Lys-Gly) (interchain with G-Cter in SUMO2) cross-link involves residue Lys40. Lys48 is covalently cross-linked (Glycyl lysine isopeptide (Lys-Gly) (interchain with G-Cter in ubiquitin)). Lys54 carries the post-translational modification N6-acetyllysine. Residue Lys83 forms a Glycyl lysine isopeptide (Lys-Gly) (interchain with G-Cter in ubiquitin) linkage. The residue at position 165 (Ser165) is a Phosphoserine.

The protein belongs to the universal ribosomal protein uL11 family. In terms of assembly, component of the large ribosomal subunit. Mature ribosomes consist of a small (40S) and a large (60S) subunit. The 40S subunit contains about 33 different proteins and 1 molecule of RNA (18S). The 60S subunit contains about 49 different proteins and 3 molecules of RNA (28S, 5.8S and 5S). Ubiquitinated at Lys-48 and Lys-83 by RNF14 and RNF25 in response to ribosome collisions (ribosome stalling).

The protein resides in the cytoplasm. In terms of biological role, component of the large ribosomal subunit. The ribosome is a large ribonucleoprotein complex responsible for the synthesis of proteins in the cell. Binds directly to 26S ribosomal RNA. The protein is Large ribosomal subunit protein uL11 (Rpl12) of Mus musculus (Mouse).